A 352-amino-acid chain; its full sequence is Ion-translocating oxidoreductase complex subunit D (352 aa).

5 consecutive transmembrane segments (helical) span residues 20–40 (IMLL…WFFG), 42–62 (GTLV…ALVL), 78–109 (ALLT…VIIA), 123–143 (PAMI…TSWL), and 148–168 (IAVN…GHTA). Position 187 is an FMN phosphoryl threonine (threonine 187). The next 5 membrane-spanning stretches (helical) occupy residues 214–234 (ILAG…GVWL), 242–262 (WHIP…GWLF), 267–287 (LAAP…FFIL), 301–321 (LIFG…GGYP), and 322–342 (DGVA…DYYT).

Belongs to the NqrB/RnfD family. As to quaternary structure, the complex is composed of six subunits: RsxA, RsxB, RsxC, RsxD, RsxE and RsxG. The cofactor is FMN.

The protein resides in the cell inner membrane. Its function is as follows. Part of a membrane-bound complex that couples electron transfer with translocation of ions across the membrane. Required to maintain the reduced state of SoxR. Probably transfers electron from NAD(P)H to SoxR. In Escherichia coli (strain K12), this protein is Ion-translocating oxidoreductase complex subunit D.